Reading from the N-terminus, the 272-residue chain is Type III pantothenate kinase (272 aa).

Residue 6–13 participates in ATP binding; that stretch reads NVNNTNTL. 113 to 116 is a binding site for substrate; the sequence is GADR. Asp115 acts as the Proton acceptor in catalysis. A K(+)-binding site is contributed by Asp135. Thr138 provides a ligand contact to ATP. A substrate-binding site is contributed by Thr190.

The protein belongs to the type III pantothenate kinase family. In terms of assembly, homodimer. NH4(+) serves as cofactor. Requires K(+) as cofactor.

Its subcellular location is the cytoplasm. It catalyses the reaction (R)-pantothenate + ATP = (R)-4'-phosphopantothenate + ADP + H(+). It participates in cofactor biosynthesis; coenzyme A biosynthesis; CoA from (R)-pantothenate: step 1/5. In terms of biological role, catalyzes the phosphorylation of pantothenate (Pan), the first step in CoA biosynthesis. This Acidobacterium capsulatum (strain ATCC 51196 / DSM 11244 / BCRC 80197 / JCM 7670 / NBRC 15755 / NCIMB 13165 / 161) protein is Type III pantothenate kinase.